The primary structure comprises 366 residues: Carbamoyl phosphate synthase small chain (366 aa).

A CPSase region spans residues 1–168 (MYGILVLEDG…KETVVYSADD (168 aa)). 3 residues coordinate L-glutamine: S45, G220, and G222. The 192-residue stretch at 172–363 (KCVLIDCGVK…VELGIKFKAE (192 aa)) folds into the Glutamine amidotransferase type-1 domain. C247 serves as the catalytic Nucleophile. The L-glutamine site is built by L248, Q251, N289, G291, and F292. Active-site residues include H336 and E338.

Belongs to the CarA family. Composed of two chains; the small (or glutamine) chain promotes the hydrolysis of glutamine to ammonia, which is used by the large (or ammonia) chain to synthesize carbamoyl phosphate. Tetramer of heterodimers (alpha,beta)4.

The catalysed reaction is hydrogencarbonate + L-glutamine + 2 ATP + H2O = carbamoyl phosphate + L-glutamate + 2 ADP + phosphate + 2 H(+). It catalyses the reaction L-glutamine + H2O = L-glutamate + NH4(+). The protein operates within amino-acid biosynthesis; L-arginine biosynthesis; carbamoyl phosphate from bicarbonate: step 1/1. It functions in the pathway pyrimidine metabolism; UMP biosynthesis via de novo pathway; (S)-dihydroorotate from bicarbonate: step 1/3. Small subunit of the glutamine-dependent carbamoyl phosphate synthetase (CPSase). CPSase catalyzes the formation of carbamoyl phosphate from the ammonia moiety of glutamine, carbonate, and phosphate donated by ATP, constituting the first step of 2 biosynthetic pathways, one leading to arginine and/or urea and the other to pyrimidine nucleotides. The small subunit (glutamine amidotransferase) binds and cleaves glutamine to supply the large subunit with the substrate ammonia. The protein is Carbamoyl phosphate synthase small chain of Methanococcus maripaludis (strain C6 / ATCC BAA-1332).